A 455-amino-acid polypeptide reads, in one-letter code: Bifunctional protein GlmU (455 aa).

A pyrophosphorylase region spans residues 1-227 (MGLSVIILAA…CEEVQGVNDR (227 aa)). UDP-N-acetyl-alpha-D-glucosamine contacts are provided by residues 8–11 (LAAG), Lys-22, Gln-73, 78–79 (GT), 100–102 (YGD), Gly-137, Glu-152, Asn-167, and Asn-225. Asp-102 provides a ligand contact to Mg(2+). Residue Asn-225 coordinates Mg(2+). A linker region spans residues 228–248 (WELTKLERYYQRLMAKKLSLA). Residues 249-455 (GVTIIDPERF…KGWHRPTKKE (207 aa)) form an N-acetyltransferase region. Residues Arg-332 and Lys-350 each contribute to the UDP-N-acetyl-alpha-D-glucosamine site. The Proton acceptor role is filled by His-362. Residues Tyr-365 and Asn-376 each contribute to the UDP-N-acetyl-alpha-D-glucosamine site. Acetyl-CoA contacts are provided by residues Ala-379, 385 to 386 (NY), Ser-404, Ala-422, and Arg-439.

In the N-terminal section; belongs to the N-acetylglucosamine-1-phosphate uridyltransferase family. The protein in the C-terminal section; belongs to the transferase hexapeptide repeat family. In terms of assembly, homotrimer. Mg(2+) is required as a cofactor.

It localises to the cytoplasm. It carries out the reaction alpha-D-glucosamine 1-phosphate + acetyl-CoA = N-acetyl-alpha-D-glucosamine 1-phosphate + CoA + H(+). It catalyses the reaction N-acetyl-alpha-D-glucosamine 1-phosphate + UTP + H(+) = UDP-N-acetyl-alpha-D-glucosamine + diphosphate. It participates in nucleotide-sugar biosynthesis; UDP-N-acetyl-alpha-D-glucosamine biosynthesis; N-acetyl-alpha-D-glucosamine 1-phosphate from alpha-D-glucosamine 6-phosphate (route II): step 2/2. Its pathway is nucleotide-sugar biosynthesis; UDP-N-acetyl-alpha-D-glucosamine biosynthesis; UDP-N-acetyl-alpha-D-glucosamine from N-acetyl-alpha-D-glucosamine 1-phosphate: step 1/1. The protein operates within bacterial outer membrane biogenesis; LPS lipid A biosynthesis. Catalyzes the last two sequential reactions in the de novo biosynthetic pathway for UDP-N-acetylglucosamine (UDP-GlcNAc). The C-terminal domain catalyzes the transfer of acetyl group from acetyl coenzyme A to glucosamine-1-phosphate (GlcN-1-P) to produce N-acetylglucosamine-1-phosphate (GlcNAc-1-P), which is converted into UDP-GlcNAc by the transfer of uridine 5-monophosphate (from uridine 5-triphosphate), a reaction catalyzed by the N-terminal domain. The protein is Bifunctional protein GlmU of Coxiella burnetii (strain CbuG_Q212) (Coxiella burnetii (strain Q212)).